The chain runs to 362 residues: Class I histocompatibility antigen, Gogo-B*0103 alpha chain (362 aa).

Positions 1 to 24 (MRVTAPRTLLLLLSAALALTETWA) are cleaved as a signal peptide. The segment at 25 to 114 (GSHSMRYFDT…ALRYYNQSEA (90 aa)) is alpha-1. Over 25-308 (GSHSMRYFDT…EPSSQSTIPI (284 aa)) the chain is Extracellular. The N-linked (GlcNAc...) asparagine glycan is linked to N110. The interval 115 to 206 (GSHTIQWMYG…ENGRETLQRA (92 aa)) is alpha-2. 2 cysteine pairs are disulfide-bonded: C125–C188 and C227–C283. An alpha-3 region spans residues 207 to 298 (DTPKTHVTHH…GLPKPLTLRW (92 aa)). One can recognise an Ig-like C1-type domain in the interval 209–295 (PKTHVTHHPI…QHEGLPKPLT (87 aa)). The connecting peptide stretch occupies residues 299-308 (EPSSQSTIPI). A helical membrane pass occupies residues 309 to 332 (VGIVAGLAVLAVVVIGAVVTAVIC). Residues 333-362 (RRKSSGGKGGSYSQAASSDSAQGSDVSLTA) lie on the Cytoplasmic side of the membrane. Residues 335–362 (KSSGGKGGSYSQAASSDSAQGSDVSLTA) form a disordered region. The span at 343–362 (SYSQAASSDSAQGSDVSLTA) shows a compositional bias: low complexity.

This sequence belongs to the MHC class I family. In terms of assembly, heterodimer of an alpha chain and a beta chain (beta-2-microglobulin).

The protein localises to the membrane. Its function is as follows. Involved in the presentation of foreign antigens to the immune system. The chain is Class I histocompatibility antigen, Gogo-B*0103 alpha chain from Gorilla gorilla gorilla (Western lowland gorilla).